Reading from the N-terminus, the 787-residue chain is Lon protease (787 aa).

The 199-residue stretch at 12–210 (LPLIPLRGLA…LIYSILLEEI (199 aa)) folds into the Lon N-terminal domain. Residue 362 to 369 (GPPGTGKT) participates in ATP binding. The region spanning 599 to 780 (NPQIGLVNGL…DEVLEQALLK (182 aa)) is the Lon proteolytic domain. Active-site residues include serine 686 and lysine 729.

It belongs to the peptidase S16 family. In terms of assembly, homohexamer. Organized in a ring with a central cavity.

The protein resides in the cytoplasm. The enzyme catalyses Hydrolysis of proteins in presence of ATP.. Its function is as follows. ATP-dependent serine protease that mediates the selective degradation of mutant and abnormal proteins as well as certain short-lived regulatory proteins. Required for cellular homeostasis and for survival from DNA damage and developmental changes induced by stress. Degrades polypeptides processively to yield small peptide fragments that are 5 to 10 amino acids long. Binds to DNA in a double-stranded, site-specific manner. The chain is Lon protease from Clostridioides difficile (strain 630) (Peptoclostridium difficile).